We begin with the raw amino-acid sequence, 745 residues long: 5-methyltetrahydropteroyltriglutamate--homocysteine methyltransferase (745 aa).

Positions 19 and 115 each coordinate 5-methyltetrahydropteroyltri-L-glutamate. L-homocysteine is bound by residues 420–422 (IGS) and glutamate 473. L-methionine is bound by residues 420–422 (IGS) and glutamate 473. 5-methyltetrahydropteroyltri-L-glutamate is bound by residues aspartate 478, tyrosine 501, 504-505 (RA), and tryptophan 550. Aspartate 588 is an L-homocysteine binding site. Position 588 (aspartate 588) interacts with L-methionine. Zn(2+) contacts are provided by histidine 630, cysteine 632, and glutamate 654. The active-site Proton donor is histidine 683. Cysteine 715 serves as a coordination point for Zn(2+).

It belongs to the vitamin-B12 independent methionine synthase family. Zn(2+) is required as a cofactor.

The enzyme catalyses 5-methyltetrahydropteroyltri-L-glutamate + L-homocysteine = tetrahydropteroyltri-L-glutamate + L-methionine. It functions in the pathway amino-acid biosynthesis; L-methionine biosynthesis via de novo pathway; L-methionine from L-homocysteine (MetE route): step 1/1. Functionally, catalyzes the transfer of a methyl group from 5-methyltetrahydrofolate to homocysteine resulting in methionine formation. The polypeptide is 5-methyltetrahydropteroyltriglutamate--homocysteine methyltransferase (Streptococcus mutans serotype c (strain ATCC 700610 / UA159)).